Consider the following 509-residue polypeptide: Transcription factor SOX-9 (509 aa).

Disordered stretches follow at residues 1 to 66 and 160 to 271; these read MNLL…ESEE and RLRV…IDFR. Residues 27 to 41 are compositionally biased toward low complexity; the sequence is SEGSRGSPCPSGSGS. Over residues 42–52 the composition is skewed to polar residues; the sequence is DTENTRPQENT. Composition is skewed to basic and acidic residues over residues 56–66 and 160–174; these read GEPDLKKESEE and RLRV…DYKY. The tract at residues 63 to 103 is dimerization (DIM); it reads ESEEDKFPVCIREAVSQVLKGYDWTLVPMPVRVNGSSKNKP. A PQA region spans residues 63–103; the sequence is ESEEDKFPVCIREAVSQVLKGYDWTLVPMPVRVNGSSKNKP. S64 is subject to Phosphoserine. Residues 105–173 constitute a DNA-binding region (HMG box); that stretch reads VKRPMNAFMV…QHKKDHPDYK (69 aa). S211 is modified (phosphoserine). The interval 224–307 is transactivation domain (TAM); sequence PGEHSGQSQG…LPPNGHPGVP (84 aa). Short sequence motifs (9aaTAD) lie at residues 275–284 and 290–298; these read IGELSSDVIS and DVNEFDQYL. Disordered regions lie at residues 335–415 and 420–439; these read WMSK…QHSP and YSPF…TRSQ. Positions 341-359 are enriched in pro residues; it reads APPPPPHPPQQPPPVPQAP. The span at 360–369 shows a compositional bias: low complexity; that stretch reads AQPQAALPQQ. Polar residues predominate over residues 380–415; sequence HTLTTLSSEPGQSQRTHIKTEQLSPSHYSEQQQHSP. The segment at 394 to 509 is transactivation domain (TAC); sequence RTHIKTEQLS…QPVYTQLTRP (116 aa). Residue K398 forms a Glycyl lysine isopeptide (Lys-Gly) (interchain with G-Cter in ubiquitin) linkage. The 9aaTAD 3 signature appears at 460 to 468; it reads SVLYSTFTY. The disordered stretch occupies residues 479-509; the sequence is PIADTSGVPSIPQTHSPQHWEQPVYTQLTRP. The segment covering 485–509 has biased composition (polar residues); the sequence is GVPSIPQTHSPQHWEQPVYTQLTRP.

Homodimer; homodimerization is required for activity. Interacts (via C-terminus) with ZNF219; forming a complex that binds to the COL2A1 promoter and activates COL2A1 expression. Interacts with DDRGK1. Interacts with EP300/p300. Interacts with beta-catenin (CTNNB1); inhibiting CTNNB1 activity by competing with the binding sites of TCF/LEF within CTNNB1. In terms of processing, acetylated; acetylation impairs nuclear localization and ability to transactivate expression of target genes. Deacetylated by SIRT1. Phosphorylation at Ser-64 and Ser-211 by PKA increases transcriptional activity and may help delay chondrocyte maturation downstream of PTHLH/PTHrP signaling. Phosphorylation at either Ser-64 or Ser-211 is required for sumoylation, but phosphorylation is not dependent on sumoylation. Phosphorylated on tyrosine residues; tyrosine dephosphorylation by PTPN11/SHP2 blocks SOX9 phosphorylation by PKA and subsequent SUMOylation. Post-translationally, sumoylated; phosphorylation at either Ser-64 or Ser-211 is required for sumoylation. Sumoylation is induced by BMP signaling pathway. In terms of processing, ubiquitinated; ubiquitination leads to proteasomal degradation and is negatively regulated by DDRGK1.

The protein resides in the nucleus. In terms of biological role, transcription factor that plays a key role in chondrocytes differentiation and skeletal development. Specifically binds the 5'-ACAAAG-3' DNA motif present in enhancers and super-enhancers and promotes expression of genes important for chondrogenesis, including cartilage matrix protein-coding genes COL2A1, COL4A2, COL9A1, COL11A2 and ACAN, SOX5 and SOX6. Also binds to some promoter regions. Plays a central role in successive steps of chondrocyte differentiation. Absolutely required for precartilaginous condensation, the first step in chondrogenesis during which skeletal progenitors differentiate into prechondrocytes. Together with SOX5 and SOX6, required for overt chondrogenesis when condensed prechondrocytes differentiate into early stage chondrocytes, the second step in chondrogenesis. Later, required to direct hypertrophic maturation and block osteoblast differentiation of growth plate chondrocytes: maintains chondrocyte columnar proliferation, delays prehypertrophy and then prevents osteoblastic differentiation of chondrocytes by lowering beta-catenin (CTNNB1) signaling and RUNX2 expression. Also required for chondrocyte hypertrophy, both indirectly, by keeping the lineage fate of chondrocytes, and directly, by remaining present in upper hypertrophic cells and transactivating COL10A1 along with MEF2C. Low lipid levels are the main nutritional determinant for chondrogenic commitment of skeletal progenitor cells: when lipids levels are low, FOXO (FOXO1 and FOXO3) transcription factors promote expression of SOX9, which induces chondrogenic commitment and suppresses fatty acid oxidation. Mechanistically, helps, but is not required, to remove epigenetic signatures of transcriptional repression and deposit active promoter and enhancer marks at chondrocyte-specific genes. Acts in cooperation with the Hedgehog pathway-dependent GLI (GLI1 and GLI3) transcription factors. In addition to cartilage development, also acts as a regulator of proliferation and differentiation in epithelial stem/progenitor cells: involved in the lung epithelium during branching morphogenesis, by balancing proliferation and differentiation and regulating the extracellular matrix. Controls epithelial branching during kidney development. The chain is Transcription factor SOX-9 (SOX9) from Sus scrofa (Pig).